Consider the following 24-residue polypeptide: Hemocyanin subunit 4e (24 aa).

The protein belongs to the tyrosinase family. Hemocyanin subfamily. Hemolymph.

The protein localises to the secreted. Its subcellular location is the extracellular space. Functionally, hemocyanins are copper-containing oxygen carriers occurring freely dissolved in the hemolymph of many mollusks and arthropods. The chain is Hemocyanin subunit 4e from Maja squinado (Mediterranean spider crab).